We begin with the raw amino-acid sequence, 964 residues long: Glycine dehydrogenase (decarboxylating) (964 aa).

Residues 1-10 (MNSTLQNRNR) are compositionally biased toward polar residues. The disordered stretch occupies residues 1 to 25 (MNSTLQNRNRTNLERVSTDPLDTFP). At Lys-713 the chain carries N6-(pyridoxal phosphate)lysine.

Belongs to the GcvP family. The glycine cleavage system is composed of four proteins: P, T, L and H. Pyridoxal 5'-phosphate is required as a cofactor.

It carries out the reaction N(6)-[(R)-lipoyl]-L-lysyl-[glycine-cleavage complex H protein] + glycine + H(+) = N(6)-[(R)-S(8)-aminomethyldihydrolipoyl]-L-lysyl-[glycine-cleavage complex H protein] + CO2. Functionally, the glycine cleavage system catalyzes the degradation of glycine. The P protein binds the alpha-amino group of glycine through its pyridoxal phosphate cofactor; CO(2) is released and the remaining methylamine moiety is then transferred to the lipoamide cofactor of the H protein. This chain is Glycine dehydrogenase (decarboxylating), found in Leptospira borgpetersenii serovar Hardjo-bovis (strain JB197).